Here is a 2150-residue protein sequence, read N- to C-terminus: Genome polyprotein (2150 aa).

G2 carries the N-myristoyl glycine; by host lipid modification. Residues 2–1463 are Cytoplasmic-facing; sequence GAQVSRQNVG…ELNLANTIIT (1462 aa). The amphipathic alpha-helix stretch occupies residues 565 to 581; that stretch reads IAQNPVENYIDEVLNEV. Positions 592–611 are disordered; the sequence is PTTSNSAPALDAAETGHTSS. Residues H868 and D885 each act as for protease 2A activity in the active site. Residues C902 and C904 each contribute to the Zn(2+) site. Residue C956 is the For protease 2A activity of the active site. C962 and H964 together coordinate Zn(2+). The segment at 1088-1157 is membrane-binding; that stretch reads SDSWLKKFTE…SLRVADMKTQ (70 aa). The interval 1088 to 1221 is oligomerization; that stretch reads SDSWLKKFTE…PPGAGKSITT (134 aa). The segment at 1109–1113 is RNA-binding; it reads GNKIS. In terms of domain architecture, SF3 helicase spans 1181–1343; sequence EAKRIKTLYI…FKDPQGKLNV (163 aa). Zn(2+) is bound by residues C1350, C1361, and C1366. A C4-type; degenerate zinc finger spans residues 1350–1366; that stretch reads CDVDNRIGNARCCPFVC. The segment at 1393–1400 is RNA-binding; the sequence is EDRRRRQV. Residues 1404 to 1409 form an oligomerization region; it reads MTAIFQ. An intramembrane segment occupies 1464 to 1479; sequence IIANVIGMARIIYVIY. At 1480–2150 the chain is on the cytoplasmic side; it reads KLFCTLQGPY…LLLHEWYEKF (671 aa). Residue Y1489 is modified to O-(5'-phospho-RNA)-tyrosine. In terms of domain architecture, Peptidase C3 spans 1508 to 1686; that stretch reads GPEEEFGMSL…FSAMLLRSYF (179 aa). Residues H1547, E1578, and C1654 each act as for protease 3C activity in the active site. The region spanning 1918-2031 is the RdRp catalytic domain; the sequence is KCIMAFDYTN…SYIHELDMEA (114 aa). Mg(2+)-binding residues include D1924 and D2017.

Belongs to the picornaviruses polyprotein family. Interacts with capsid protein VP1 and capsid protein VP3 to form heterotrimeric protomers. As to quaternary structure, interacts with capsid protein VP0, and capsid protein VP3 to form heterotrimeric protomers. Five protomers subsequently associate to form pentamers which serve as building blocks for the capsid. Interacts with capsid protein VP2, capsid protein VP3 and capsid protein VP4 following cleavage of capsid protein VP0. In terms of assembly, interacts with capsid protein VP1 and capsid protein VP3 in the mature capsid. Interacts with capsid protein VP0 and capsid protein VP1 to form heterotrimeric protomers. Five protomers subsequently associate to form pentamers which serve as building blocks for the capsid. Interacts with capsid protein VP4 in the mature capsid. Interacts with protein 2C; this interaction may be important for virion morphogenesis. As to quaternary structure, interacts with capsid protein VP1 and capsid protein VP3. In terms of assembly, homodimer. Homohexamer; forms a hexameric ring structure with 6-fold symmetry characteristic of AAA+ ATPases. Interacts (via N-terminus) with host RTN3 (via reticulon domain); this interaction is important for viral replication. Interacts with capsid protein VP3; this interaction may be important for virion morphogenesis. As to quaternary structure, interacts with protein 3CD. In terms of assembly, homodimer. Interacts with host GBF1. Interacts (via GOLD domain) with host ACBD3 (via GOLD domain); this interaction allows the formation of a viral protein 3A/ACBD3 heterotetramer with a 2:2 stoichiometry, which will stimulate the recruitment of host PI4KB in order to synthesize PI4P at the viral RNA replication sites. Interacts with RNA-directed RNA polymerase. As to quaternary structure, interacts with protein 3AB and with RNA-directed RNA polymerase. In terms of assembly, interacts with Viral protein genome-linked and with protein 3CD. Requires Mg(2+) as cofactor. Post-translationally, specific enzymatic cleavages in vivo by the viral proteases yield processing intermediates and the mature proteins. Myristoylation is required for the formation of pentamers during virus assembly. Further assembly of 12 pentamers and a molecule of genomic RNA generates the provirion. In terms of processing, during virion maturation, immature virions are rendered infectious following cleavage of VP0 into VP4 and VP2. This maturation seems to be an autocatalytic event triggered by the presence of RNA in the capsid and it is followed by a conformational change infectious virion. Post-translationally, myristoylation is required during RNA encapsidation and formation of the mature virus particle. VPg is uridylylated by the polymerase into VPg-pUpU. This acts as a nucleotide-peptide primer for the genomic RNA replication.

Its subcellular location is the virion. The protein localises to the host cytoplasm. The protein resides in the host cytoplasmic vesicle membrane. It localises to the host nucleus. The catalysed reaction is a ribonucleoside 5'-triphosphate + H2O = a ribonucleoside 5'-diphosphate + phosphate + H(+). It catalyses the reaction Selective cleavage of Tyr-|-Gly bond in the picornavirus polyprotein.. The enzyme catalyses RNA(n) + a ribonucleoside 5'-triphosphate = RNA(n+1) + diphosphate. It carries out the reaction Selective cleavage of Gln-|-Gly bond in the poliovirus polyprotein. In other picornavirus reactions Glu may be substituted for Gln, and Ser or Thr for Gly.. Its activity is regulated as follows. Replication or transcription is subject to high level of random mutations by the nucleotide analog ribavirin. Forms an icosahedral capsid of pseudo T=3 symmetry with capsid proteins VP2 and VP3. The capsid is 300 Angstroms in diameter, composed of 60 copies of each capsid protein and enclosing the viral positive strand RNA genome. Capsid protein VP1 mainly forms the vertices of the capsid. Capsid protein VP1 interacts with host cell receptor to provide virion attachment to target host cells. This attachment induces virion internalization. Tyrosine kinases are probably involved in the entry process. After binding to its receptor, the capsid undergoes conformational changes. Capsid protein VP1 N-terminus (that contains an amphipathic alpha-helix) and capsid protein VP4 are externalized. Together, they shape a pore in the host membrane through which viral genome is translocated to host cell cytoplasm. In terms of biological role, forms an icosahedral capsid of pseudo T=3 symmetry with capsid proteins VP2 and VP3. The capsid is 300 Angstroms in diameter, composed of 60 copies of each capsid protein and enclosing the viral positive strand RNA genome. Functionally, lies on the inner surface of the capsid shell. After binding to the host receptor, the capsid undergoes conformational changes. Capsid protein VP4 is released, Capsid protein VP1 N-terminus is externalized, and together, they shape a pore in the host membrane through which the viral genome is translocated into the host cell cytoplasm. Its function is as follows. Component of immature procapsids, which is cleaved into capsid proteins VP4 and VP2 after maturation. Allows the capsid to remain inactive before the maturation step. Cysteine protease that cleaves viral polyprotein and specific host proteins. It is responsible for the autocatalytic cleavage between the P1 and P2 regions, which is the first cleavage occurring in the polyprotein. Also cleaves the host translation initiation factor EIF4G1, in order to shut down the capped cellular mRNA translation. Inhibits the host nucleus-cytoplasm protein and RNA trafficking by cleaving host members of the nuclear pores. Counteracts stress granule formation probably by antagonizing its assembly or promoting its dissassembly. In terms of biological role, plays an essential role in the virus replication cycle by acting as a viroporin. Creates a pore in the host endoplasmic reticulum and as a consequence releases Ca2+ in the cytoplasm of infected cell. In turn, high levels of cytoplasmic calcium may trigger membrane trafficking and transport of viral ER-associated proteins to viroplasms, sites of viral genome replication. Functionally, induces and associates with structural rearrangements of intracellular membranes. Displays RNA-binding, nucleotide binding and NTPase activities. May play a role in virion morphogenesis and viral RNA encapsidation by interacting with the capsid protein VP3. Its function is as follows. Localizes the viral replication complex to the surface of membranous vesicles. Together with protein 3CD binds the Cis-Active RNA Element (CRE) which is involved in RNA synthesis initiation. Acts as a cofactor to stimulate the activity of 3D polymerase, maybe through a nucleid acid chaperone activity. Localizes the viral replication complex to the surface of membranous vesicles. It inhibits host cell endoplasmic reticulum-to-Golgi apparatus transport and causes the disassembly of the Golgi complex, possibly through GBF1 interaction. This would result in depletion of MHC, trail receptors and IFN receptors at the host cell surface. Plays an essential role in viral RNA replication by recruiting ACBD3 and PI4KB at the viral replication sites, thereby allowing the formation of the rearranged membranous structures where viral replication takes place. In terms of biological role, acts as a primer for viral RNA replication and remains covalently bound to viral genomic RNA. VPg is uridylylated prior to priming replication into VPg-pUpU. The oriI viral genomic sequence may act as a template for this. The VPg-pUpU is then used as primer on the genomic RNA poly(A) by the RNA-dependent RNA polymerase to replicate the viral genome. During genome replication, the VPg-RNA linkage is removed by the host TDP2, thereby accelerating replication. During the late stage of the replication cycle, host TDP2 is excluded from sites of viral RNA synthesis and encapsidation, allowing for the generation of progeny virions. Functionally, involved in the viral replication complex and viral polypeptide maturation. It exhibits protease activity with a specificity and catalytic efficiency that is different from protease 3C. Protein 3CD lacks polymerase activity. Protein 3CD binds to the 5'UTR of the viral genome. Its function is as follows. Replicates the viral genomic RNA on the surface of intracellular membranes. May form linear arrays of subunits that propagate along a strong head-to-tail interaction called interface-I. Covalently attaches UMP to a tyrosine of VPg, which is used to prime RNA synthesis. The positive stranded RNA genome is first replicated at virus induced membranous vesicles, creating a dsRNA genomic replication form. This dsRNA is then used as template to synthesize positive stranded RNA genomes. ss(+)RNA genomes are either translated, replicated or encapsidated. Major viral protease that mediates proteolytic processing of the polyprotein. Cleaves host EIF5B, contributing to host translation shutoff. Also cleaves host PABPC1, contributing to host translation shutoff. Cleaves host NLRP1, triggers host N-glycine-mediated degradation of the autoinhibitory NLRP1 N-terminal fragment. This Homo sapiens (Human) protein is Genome polyprotein.